The chain runs to 317 residues: 2,3-dihydroxyphenylpropionate/2,3-dihydroxicinnamic acid 1,2-dioxygenase (317 aa).

The active-site Proton donor is histidine 115. Histidine 179 acts as the Proton acceptor in catalysis.

The protein belongs to the LigB/MhpB extradiol dioxygenase family. In terms of assembly, homotetramer. The cofactor is Fe(2+).

It carries out the reaction 3-(2,3-dihydroxyphenyl)propanoate + O2 = (2Z,4E)-2-hydroxy-6-oxonona-2,4-dienedioate + H(+). The enzyme catalyses (2E)-3-(2,3-dihydroxyphenyl)prop-2-enoate + O2 = (2Z,4E,7E)-2-hydroxy-6-oxonona-2,4,7-trienedioate + H(+). The protein operates within aromatic compound metabolism; 3-phenylpropanoate degradation. In terms of biological role, catalyzes the non-heme iron(II)-dependent oxidative cleavage of 2,3-dihydroxyphenylpropionic acid and 2,3-dihydroxicinnamic acid into 2-hydroxy-6-ketononadienedioate and 2-hydroxy-6-ketononatrienedioate, respectively. The polypeptide is 2,3-dihydroxyphenylpropionate/2,3-dihydroxicinnamic acid 1,2-dioxygenase (Burkholderia vietnamiensis (strain G4 / LMG 22486) (Burkholderia cepacia (strain R1808))).